Reading from the N-terminus, the 537-residue chain is Nedd4 binding protein 3 (537 aa).

A Phosphoserine modification is found at serine 172. 3 disordered regions span residues leucine 173–cysteine 234, arginine 327–alanine 359, and leucine 422–glutamate 456. Residues proline 178–glycine 207 are compositionally biased toward low complexity. Residues valine 295–glutamate 523 are a coiled coil.

The protein belongs to the N4BP3 family. In terms of assembly, binds NEDD4. Interacts with 14-3-3 proteins. Interacts with MAVS.

It localises to the cytoplasmic vesicle. Its subcellular location is the cell projection. The protein localises to the axon. It is found in the dendrite. Its function is as follows. Plays a positive role in the antiviral innate immune signaling pathway. Mechanistically, interacts with MAVS and functions as a positive regulator to promote 'Lys-63'-linked polyubiquitination of MAVS and thus strengthens the interaction between MAVS and TRAF2. Also plays a role in axon and dendrite arborization during cranial nerve development. May also be important for neural crest migration and early development of other anterior structures including eye, brain and cranial cartilage. The sequence is that of Nedd4 binding protein 3 from Rattus norvegicus (Rat).